Consider the following 277-residue polypeptide: Thiazole synthase (277 aa).

Lysine 119 functions as the Schiff-base intermediate with DXP in the catalytic mechanism. 1-deoxy-D-xylulose 5-phosphate-binding positions include glycine 180, 206–207 (AG), and 228–229 (NT).

This sequence belongs to the ThiG family. Homotetramer. Forms heterodimers with either ThiH or ThiS.

It is found in the plastid. The protein resides in the chloroplast. It carries out the reaction [ThiS sulfur-carrier protein]-C-terminal-Gly-aminoethanethioate + 2-iminoacetate + 1-deoxy-D-xylulose 5-phosphate = [ThiS sulfur-carrier protein]-C-terminal Gly-Gly + 2-[(2R,5Z)-2-carboxy-4-methylthiazol-5(2H)-ylidene]ethyl phosphate + 2 H2O + H(+). The protein operates within cofactor biosynthesis; thiamine diphosphate biosynthesis. Functionally, catalyzes the rearrangement of 1-deoxy-D-xylulose 5-phosphate (DXP) to produce the thiazole phosphate moiety of thiamine. Sulfur is provided by the thiocarboxylate moiety of the carrier protein ThiS. In vitro, sulfur can be provided by H(2)S. This Pyropia yezoensis (Susabi-nori) protein is Thiazole synthase.